The sequence spans 219 residues: Probable nicotinate-nucleotide adenylyltransferase (219 aa).

This sequence belongs to the NadD family.

The enzyme catalyses nicotinate beta-D-ribonucleotide + ATP + H(+) = deamido-NAD(+) + diphosphate. It participates in cofactor biosynthesis; NAD(+) biosynthesis; deamido-NAD(+) from nicotinate D-ribonucleotide: step 1/1. Its function is as follows. Catalyzes the reversible adenylation of nicotinate mononucleotide (NaMN) to nicotinic acid adenine dinucleotide (NaAD). The protein is Probable nicotinate-nucleotide adenylyltransferase of Cronobacter sakazakii (strain ATCC BAA-894) (Enterobacter sakazakii).